A 450-amino-acid chain; its full sequence is Cell division cycle 20.5, cofactor of APC complex (450 aa).

WD repeat units lie at residues A129–L166, E171–T210, G214–E251, G255–P294, E304–S346, E348–E389, and G392–T431.

This sequence belongs to the WD repeat CDC20/Fizzy family. The APC/C is composed of at least 11 subunits that stay tightly associated throughout the cell cycle. Binds to GIG1 and PYM. Part of the mitotic checkpoint complex (MCC); interacts with MAD2 and BUB1.

It is found in the nucleus. It functions in the pathway protein modification; protein ubiquitination. Its function is as follows. Component of the anaphase promoting complex/cyclosome (APC/C), a cell cycle-regulated E3 ubiquitin-protein ligase complex that controls progression through mitosis and the G1 phase of the cell cycle. This chain is Cell division cycle 20.5, cofactor of APC complex (CDC20-5), found in Arabidopsis thaliana (Mouse-ear cress).